The chain runs to 700 residues: Acetyl-coenzyme A carboxylase carboxyl transferase subunit beta, chloroplastic (700 aa).

Positions 34, 37, 53, and 56 each coordinate Zn(2+). The C4-type zinc finger occupies 34 to 56 (CENCETLIYKKSLLEQKGVCAEC). In terms of domain architecture, CoA carboxyltransferase N-terminal spans 445–700 (KKGRDTKDTE…ETIEIYMYGD (256 aa)).

It belongs to the AccD/PCCB family. As to quaternary structure, acetyl-CoA carboxylase is a heterohexamer composed of biotin carboxyl carrier protein, biotin carboxylase and 2 subunits each of ACCase subunit alpha and ACCase plastid-coded subunit beta (accD). Requires Zn(2+) as cofactor.

Its subcellular location is the plastid. The protein localises to the chloroplast stroma. It carries out the reaction N(6)-carboxybiotinyl-L-lysyl-[protein] + acetyl-CoA = N(6)-biotinyl-L-lysyl-[protein] + malonyl-CoA. It participates in lipid metabolism; malonyl-CoA biosynthesis; malonyl-CoA from acetyl-CoA: step 1/1. In terms of biological role, component of the acetyl coenzyme A carboxylase (ACC) complex. Biotin carboxylase (BC) catalyzes the carboxylation of biotin on its carrier protein (BCCP) and then the CO(2) group is transferred by the transcarboxylase to acetyl-CoA to form malonyl-CoA. The sequence is that of Acetyl-coenzyme A carboxylase carboxyl transferase subunit beta, chloroplastic from Cryptomeria japonica (Japanese cedar).